Here is a 166-residue protein sequence, read N- to C-terminus: Altered inheritance of mitochondria protein 11 (166 aa).

Helical transmembrane passes span methionine 35 to tyrosine 52 and alanine 81 to threonine 103.

It belongs to the AIM11 family.

It localises to the membrane. This chain is Altered inheritance of mitochondria protein 11 (AIM11), found in Debaryomyces hansenii (strain ATCC 36239 / CBS 767 / BCRC 21394 / JCM 1990 / NBRC 0083 / IGC 2968) (Yeast).